The primary structure comprises 116 residues: Ribosome-binding factor A (116 aa).

The protein belongs to the RbfA family. In terms of assembly, monomer. Binds 30S ribosomal subunits, but not 50S ribosomal subunits or 70S ribosomes.

It is found in the cytoplasm. In terms of biological role, one of several proteins that assist in the late maturation steps of the functional core of the 30S ribosomal subunit. Associates with free 30S ribosomal subunits (but not with 30S subunits that are part of 70S ribosomes or polysomes). Required for efficient processing of 16S rRNA. May interact with the 5'-terminal helix region of 16S rRNA. This chain is Ribosome-binding factor A, found in Chlorobium phaeobacteroides (strain BS1).